The chain runs to 642 residues: Threonine--tRNA ligase (642 aa).

Residues 1–61 (MPVITLPDGS…ENDATLSIIT (61 aa)) form the TGS domain. The catalytic stretch occupies residues 243–534 (DHRKIGKQLD…LTEEFAGFFP (292 aa)). Positions 334, 385, and 511 each coordinate Zn(2+).

This sequence belongs to the class-II aminoacyl-tRNA synthetase family. In terms of assembly, homodimer. The cofactor is Zn(2+).

The protein localises to the cytoplasm. It catalyses the reaction tRNA(Thr) + L-threonine + ATP = L-threonyl-tRNA(Thr) + AMP + diphosphate + H(+). Functionally, catalyzes the attachment of threonine to tRNA(Thr) in a two-step reaction: L-threonine is first activated by ATP to form Thr-AMP and then transferred to the acceptor end of tRNA(Thr). Also edits incorrectly charged L-seryl-tRNA(Thr). The polypeptide is Threonine--tRNA ligase (Salmonella agona (strain SL483)).